The following is a 60-amino-acid chain: Large ribosomal subunit protein uL30 (60 aa).

The protein belongs to the universal ribosomal protein uL30 family. Part of the 50S ribosomal subunit.

This chain is Large ribosomal subunit protein uL30, found in Sphingopyxis alaskensis (strain DSM 13593 / LMG 18877 / RB2256) (Sphingomonas alaskensis).